The following is a 732-amino-acid chain: Elongation factor 2 (732 aa).

The tr-type G domain maps to 19 to 260 (ERIRNIDIAA…MVIKNLPNPR (242 aa)). Residues 28–35 (AHIDHGKT), 94–98 (DTPGH), and 148–151 (NKVD) each bind GTP. The residue at position 598 (His-598) is a Diphthamide.

Belongs to the TRAFAC class translation factor GTPase superfamily. Classic translation factor GTPase family. EF-G/EF-2 subfamily.

Its subcellular location is the cytoplasm. Functionally, catalyzes the GTP-dependent ribosomal translocation step during translation elongation. During this step, the ribosome changes from the pre-translocational (PRE) to the post-translocational (POST) state as the newly formed A-site-bound peptidyl-tRNA and P-site-bound deacylated tRNA move to the P and E sites, respectively. Catalyzes the coordinated movement of the two tRNA molecules, the mRNA and conformational changes in the ribosome. This is Elongation factor 2 from Picrophilus torridus (strain ATCC 700027 / DSM 9790 / JCM 10055 / NBRC 100828 / KAW 2/3).